Consider the following 222-residue polypeptide: Glutathione S-transferase A4 (222 aa).

Methionine 1 carries the post-translational modification N-acetylmethionine. The region spanning 3–83 is the GST N-terminal domain; the sequence is TKPKLHYPNG…YIADKHHLFG (81 aa). Residues tyrosine 9, 54-55, and 67-68 contribute to the glutathione site; these read QV and QT. Residues 85–208 enclose the GST C-terminal domain; that stretch reads DLKERTLIDM…EPGSKKKPPP (124 aa).

The protein belongs to the GST superfamily. Alpha family. In terms of assembly, homodimer.

The protein localises to the cytoplasm. The catalysed reaction is RX + glutathione = an S-substituted glutathione + a halide anion + H(+). Functionally, conjugation of reduced glutathione to a wide number of exogenous and endogenous hydrophobic electrophiles. The sequence is that of Glutathione S-transferase A4 (GSTA4) from Bos taurus (Bovine).